The primary structure comprises 132 residues: Small ribosomal subunit protein uS11 (132 aa).

Positions 1–24 are disordered; that stretch reads MAAPKQAARKPRRRDRKSVPVGQA. Residues 7-16 are compositionally biased toward basic residues; it reads AARKPRRRDR.

The protein belongs to the universal ribosomal protein uS11 family. Part of the 30S ribosomal subunit. Interacts with proteins S7 and S18. Binds to IF-3.

Its function is as follows. Located on the platform of the 30S subunit, it bridges several disparate RNA helices of the 16S rRNA. Forms part of the Shine-Dalgarno cleft in the 70S ribosome. The protein is Small ribosomal subunit protein uS11 of Bifidobacterium longum (strain DJO10A).